A 391-amino-acid chain; its full sequence is Metallophosphoesterase 1 (391 aa).

A helical membrane pass occupies residues 25–45; that stretch reads TVVIISVLLFCEYFIYHLVIF. The a divalent metal cation site is built by aspartate 72, aspartate 114, asparagine 152, histidine 244, histidine 298, and histidine 300. Residues 352–372 traverse the membrane as a helical segment; sequence VLATYGAAAVFLVVLILAHLE.

The protein belongs to the metallophosphoesterase superfamily. MPPE1 family. In terms of assembly, interacts with GPI-anchor proteins (via the GPI portion). Interacts with TMED10. It depends on Mn(2+) as a cofactor.

It is found in the endoplasmic reticulum-Golgi intermediate compartment membrane. Functionally, metallophosphoesterase that catalyzes the removal of a side-chain ethanolamine-phosphate (EtNP) from the second mannose of the GPI-anchor protein intermediate. Participates in the glycan remodeling steps of GPI-anchor maturation to allow an efficient transport of GPI-anchor proteins from the endoplasmic reticulum to the Golgi. The chain is Metallophosphoesterase 1 from Cricetulus griseus (Chinese hamster).